We begin with the raw amino-acid sequence, 257 residues long: Thiazole synthase (257 aa).

Catalysis depends on Lys-96, which acts as the Schiff-base intermediate with DXP. 1-deoxy-D-xylulose 5-phosphate is bound by residues Gly-157, 184–185, and 206–207; these read AG and NT.

It belongs to the ThiG family. As to quaternary structure, homotetramer. Forms heterodimers with either ThiH or ThiS.

It localises to the cytoplasm. It catalyses the reaction [ThiS sulfur-carrier protein]-C-terminal-Gly-aminoethanethioate + 2-iminoacetate + 1-deoxy-D-xylulose 5-phosphate = [ThiS sulfur-carrier protein]-C-terminal Gly-Gly + 2-[(2R,5Z)-2-carboxy-4-methylthiazol-5(2H)-ylidene]ethyl phosphate + 2 H2O + H(+). Its pathway is cofactor biosynthesis; thiamine diphosphate biosynthesis. In terms of biological role, catalyzes the rearrangement of 1-deoxy-D-xylulose 5-phosphate (DXP) to produce the thiazole phosphate moiety of thiamine. Sulfur is provided by the thiocarboxylate moiety of the carrier protein ThiS. In vitro, sulfur can be provided by H(2)S. The sequence is that of Thiazole synthase from Agrobacterium fabrum (strain C58 / ATCC 33970) (Agrobacterium tumefaciens (strain C58)).